The following is a 428-amino-acid chain: MSSTVVVGSQWGDEGKGKITDFLSEKADVIARYQGGDNAGHTIVFNGQTFKLRLIPSGIFYADKTSVIGNGVVLNPQSLIEELTYLHDNGVATDNLRISDRAHVILPYHILLDQAQEKAKASKIGTTNKGIGPAYMDKAERIGIRVADLLDHDIFAEKLHQNLIEKNKVLTKLYDEEPLNYDDIFETYYALGQQLKGYVTDTSVVINDALDAGKNVLFEGAQGVMLDIDHGTYPFVTSSNPVAGGVTIGSGVGPTKIDHVVGVCKAYTSRVGDGPFPTELFDEIGDTIRETGHEYGTVTKRPRRIGWFDSVVLRHAKRVSGLTTLSLNCLDVLTGLKTVKICKAYQLNGETIYHYPASLVDLDACQPVYEELPGWDEDITHCRSVAELPANAQTYVKRLAELVGVEIATLSVGPDREQTNILQDVWNA.

GTP is bound by residues 12–18 and 40–42; these read GDEGKGK and GHT. Asp-13 functions as the Proton acceptor in the catalytic mechanism. Mg(2+)-binding residues include Asp-13 and Gly-40. IMP is bound by residues 13 to 16, 38 to 41, Thr-127, Arg-141, Gln-222, Thr-237, and Arg-301; these read DEGK and NAGH. The Proton donor role is filled by His-41. 297–303 contributes to the substrate binding site; sequence TVTKRPR. GTP is bound by residues Arg-303, 329-331, and 411-413; these read CLD and SVG.

This sequence belongs to the adenylosuccinate synthetase family. Homodimer. The cofactor is Mg(2+).

It localises to the cytoplasm. It catalyses the reaction IMP + L-aspartate + GTP = N(6)-(1,2-dicarboxyethyl)-AMP + GDP + phosphate + 2 H(+). Its pathway is purine metabolism; AMP biosynthesis via de novo pathway; AMP from IMP: step 1/2. Functionally, plays an important role in the de novo pathway of purine nucleotide biosynthesis. Catalyzes the first committed step in the biosynthesis of AMP from IMP. The protein is Adenylosuccinate synthetase of Levilactobacillus brevis (strain ATCC 367 / BCRC 12310 / CIP 105137 / JCM 1170 / LMG 11437 / NCIMB 947 / NCTC 947) (Lactobacillus brevis).